We begin with the raw amino-acid sequence, 218 residues long: OPA3-like protein (218 aa).

Residues N129–N179 adopt a coiled-coil conformation. The interval T175–G218 is disordered. Residues L176 to A189 show a composition bias toward polar residues. Residues E194–H206 are compositionally biased toward basic and acidic residues. The segment covering P208–G218 has biased composition (polar residues).

It belongs to the OPA3 family.

The protein is OPA3-like protein of Schizosaccharomyces pombe (strain 972 / ATCC 24843) (Fission yeast).